The following is a 316-amino-acid chain: UPF0324 membrane protein SO_4708 (316 aa).

Transmembrane regions (helical) follow at residues 61-80, 85-107, 114-136, 146-168, 175-197, 207-226, 233-252, 262-281, and 293-315; these read LLSYSIIGLGFGINLTAAIE, NLGLIIGSIIFTLILGFIVTRAL, GHLIASGTAICGGSAIAAVAPAV, ALACVFVLNSVALFLFPALGHLL, FGVWSAIAIHDTSSVVGAASAYG, IKLARALWIIPIALVSALIF, LNLPYFIGFYCLAIAIAHWL, LFMVSKHTLVLCLFLIGAGI, and PLLLGVILWMAIGVTSLAYILYF.

Belongs to the UPF0324 family.

It is found in the cell membrane. This Shewanella oneidensis (strain ATCC 700550 / JCM 31522 / CIP 106686 / LMG 19005 / NCIMB 14063 / MR-1) protein is UPF0324 membrane protein SO_4708.